The following is a 202-amino-acid chain: Ribosome maturation factor RimP (202 aa).

Belongs to the RimP family.

The protein resides in the cytoplasm. Required for maturation of 30S ribosomal subunits. The polypeptide is Ribosome maturation factor RimP (Paracidovorax citrulli (strain AAC00-1) (Acidovorax citrulli)).